A 482-amino-acid polypeptide reads, in one-letter code: Scarecrow-like protein 3 (482 aa).

Residues 45 to 479 (LKPEERGLYL…RPLYSVSAWR (435 aa)) form the GRAS domain. The leucine repeat I (LRI) stretch occupies residues 52–115 (LYLIHLLLTC…ILKSWPGLYK (64 aa)). Positions 134-199 (RRLFFEMFPI…EGPPHLRITG (66 aa)) are VHIID. A VHIID motif is present at residues 165 to 169 (VHVID). The leucine repeat II (LRII) stretch occupies residues 209–241 (QMAHRLIEEAEKLDIPFQFNPVVSRLDCLNVEQ). Residues 250 to 401 (LAVSSVLQLH…KMLFGEEIKN (152 aa)) are PFYRE. The tract at residues 302 to 324 (ENDMSNNNGYSPSGDSASSLPLP) is disordered. The span at 305–324 (MSNNNGYSPSGDSASSLPLP) shows a compositional bias: polar residues. The tract at residues 404–479 (SCEGFERRER…RPLYSVSAWR (76 aa)) is SAW.

The protein belongs to the GRAS family. In terms of assembly, binds to zinc finger proteins MGP/IDD3, IDD4, IDD5, BIB/IDD9 and JKD/IDD10. In terms of tissue distribution, expressed in seedlings, root epidermis, leaves, flowers and siliques.

Its subcellular location is the nucleus. In terms of biological role, probable transcription factor involved in plant development. The sequence is that of Scarecrow-like protein 3 from Arabidopsis thaliana (Mouse-ear cress).